Consider the following 404-residue polypeptide: Argininosuccinate synthase (404 aa).

Residue 9 to 17 coordinates ATP; that stretch reads AYSGGLDTS. Y86 contacts L-citrulline. Residue G116 coordinates ATP. L-aspartate contacts are provided by T118, N122, and D123. N122 serves as a coordination point for L-citrulline. L-citrulline contacts are provided by R126, S174, S183, E259, and Y271.

It belongs to the argininosuccinate synthase family. Type 1 subfamily. Homotetramer.

The protein resides in the cytoplasm. It catalyses the reaction L-citrulline + L-aspartate + ATP = 2-(N(omega)-L-arginino)succinate + AMP + diphosphate + H(+). It functions in the pathway amino-acid biosynthesis; L-arginine biosynthesis; L-arginine from L-ornithine and carbamoyl phosphate: step 2/3. The polypeptide is Argininosuccinate synthase (Listeria innocua serovar 6a (strain ATCC BAA-680 / CLIP 11262)).